Reading from the N-terminus, the 297-residue chain is Homoserine kinase (297 aa).

84-94 (PLSKGFGSSAA) serves as a coordination point for ATP.

The protein belongs to the GHMP kinase family. Homoserine kinase subfamily.

It localises to the cytoplasm. It carries out the reaction L-homoserine + ATP = O-phospho-L-homoserine + ADP + H(+). It participates in amino-acid biosynthesis; L-threonine biosynthesis; L-threonine from L-aspartate: step 4/5. Functionally, catalyzes the ATP-dependent phosphorylation of L-homoserine to L-homoserine phosphate. The protein is Homoserine kinase of Shouchella clausii (strain KSM-K16) (Alkalihalobacillus clausii).